Reading from the N-terminus, the 625-residue chain is RalA-binding protein 1 (625 aa).

Basic and acidic residues-rich tracts occupy residues 1–11 (MDFDSPEEKEF) and 20–60 (ADAK…KDRG). The interval 1–172 (MDFDSPEEKE…SKQLSQQQDD (172 aa)) is disordered. Serine 68 and serine 69 each carry phosphoserine. Residues 94 to 157 (KSKEKREKSR…EKDKKADKKD (64 aa)) are compositionally biased toward basic and acidic residues. Residues 191 to 385 (VSLATERSRC…PLTSTSPKLP (195 aa)) form the Rho-GAP domain. The disordered stretch occupies residues 443–500 (QEKTAEEVDNSSSAPPAVASEDTTDSKPAGTPAVSTNNSISQEEPKTDTLTPKDAPND). Positions 475–484 (AVSTNNSISQ) are enriched in polar residues.

In terms of assembly, interacts with CycB and numb.

Functionally, participates in receptor endocytosis during interphase, is also involved in mitotic processes when endocytosis is switched off. This Drosophila melanogaster (Fruit fly) protein is RalA-binding protein 1.